We begin with the raw amino-acid sequence, 317 residues long: Protease HtpX homolog (317 aa).

2 helical membrane-spanning segments follow: residues 14–34 (LMGI…LYYI) and 41–61 (IALL…QWLF). Histidine 146 contributes to the Zn(2+) binding site. The active site involves glutamate 147. Histidine 150 is a binding site for Zn(2+). The next 2 membrane-spanning stretches (helical) occupy residues 158 to 178 (MLLA…TLLF) and 189 to 209 (IVLL…LILA). Position 215 (glutamate 215) interacts with Zn(2+).

This sequence belongs to the peptidase M48B family. Requires Zn(2+) as cofactor.

It is found in the cell membrane. The sequence is that of Protease HtpX homolog from Thermoplasma acidophilum (strain ATCC 25905 / DSM 1728 / JCM 9062 / NBRC 15155 / AMRC-C165).